A 67-amino-acid chain; its full sequence is MFTLKKSFLLLFFLGTITLSLCEEERGADDDDGEEEVKRGIMDTVKGVAKTVAASLLDKLKCKITGC.

A signal peptide spans 1 to 22 (MFTLKKSFLLLFFLGTITLSLC). A propeptide spanning residues 23–39 (EEERGADDDDGEEEVKR) is cleaved from the precursor. C62 and C67 are oxidised to a cystine.

Expressed by the skin glands.

It is found in the secreted. Antimicrobial peptide. The sequence is that of Ranatuerin-2Vb from Odorrana versabilis (Chinese bamboo leaf odorous frog).